The primary structure comprises 159 residues: MNHKKEKEYKKLDTEKLKENLTELQYNVTQRNATEKPFLNKYDKHFEDGIYVDIVSGEPLFLSIDKFNSGCGWPAFSKPISRKYIKERADFSHGMSRIEVRSKNADSHLGHVFNDGPIENGGMRYCINSASLKFIAKDKLKEEGYEEFLPLFEKDKQEL.

The 124-residue stretch at 14–137 folds into the MsrB domain; sequence TEKLKENLTE…NSASLKFIAK (124 aa). Catalysis depends on Cys126, which acts as the Nucleophile.

This sequence belongs to the MsrB Met sulfoxide reductase family.

The enzyme catalyses L-methionyl-[protein] + [thioredoxin]-disulfide + H2O = L-methionyl-(R)-S-oxide-[protein] + [thioredoxin]-dithiol. This Hathewaya histolytica (Clostridium histolyticum) protein is Peptide methionine sulfoxide reductase MsrB.